The following is a 396-amino-acid chain: Argininosuccinate synthase (396 aa).

9–17 (AYSGGLDTS) is an ATP binding site. Position 85 (tyrosine 85) interacts with L-citrulline. Residue glycine 115 coordinates ATP. L-aspartate is bound by residues threonine 117, asparagine 121, and aspartate 122. Asparagine 121 contributes to the L-citrulline binding site. 4 residues coordinate L-citrulline: arginine 125, serine 173, glutamate 258, and tyrosine 270.

Belongs to the argininosuccinate synthase family. Type 1 subfamily. In terms of assembly, homotetramer.

The protein localises to the cytoplasm. It carries out the reaction L-citrulline + L-aspartate + ATP = 2-(N(omega)-L-arginino)succinate + AMP + diphosphate + H(+). Its pathway is amino-acid biosynthesis; L-arginine biosynthesis; L-arginine from L-ornithine and carbamoyl phosphate: step 2/3. This is Argininosuccinate synthase from Streptococcus agalactiae serotype III (strain NEM316).